The following is a 404-amino-acid chain: Cysteine desulfurase IscS (404 aa).

Pyridoxal 5'-phosphate contacts are provided by residues 75 to 76, asparagine 155, glutamine 183, and 203 to 205; these read AT and SGH. The residue at position 206 (lysine 206) is an N6-(pyridoxal phosphate)lysine. Threonine 243 is a binding site for pyridoxal 5'-phosphate. The active-site Cysteine persulfide intermediate is cysteine 328. Cysteine 328 is a [2Fe-2S] cluster binding site.

Belongs to the class-V pyridoxal-phosphate-dependent aminotransferase family. NifS/IscS subfamily. In terms of assembly, homodimer. Forms a heterotetramer with IscU, interacts with other sulfur acceptors. The cofactor is pyridoxal 5'-phosphate.

Its subcellular location is the cytoplasm. The catalysed reaction is (sulfur carrier)-H + L-cysteine = (sulfur carrier)-SH + L-alanine. It functions in the pathway cofactor biosynthesis; iron-sulfur cluster biosynthesis. Functionally, master enzyme that delivers sulfur to a number of partners involved in Fe-S cluster assembly, tRNA modification or cofactor biosynthesis. Catalyzes the removal of elemental sulfur atoms from cysteine to produce alanine. Functions as a sulfur delivery protein for Fe-S cluster synthesis onto IscU, an Fe-S scaffold assembly protein, as well as other S acceptor proteins. The polypeptide is Cysteine desulfurase IscS (Shewanella denitrificans (strain OS217 / ATCC BAA-1090 / DSM 15013)).